The sequence spans 220 residues: ATP synthase subunit beta, chloroplastic (220 aa).

Belongs to the ATPase alpha/beta chains family. F-type ATPases have 2 components, CF(1) - the catalytic core - and CF(0) - the membrane proton channel. CF(1) has five subunits: alpha(3), beta(3), gamma(1), delta(1), epsilon(1). CF(0) has four main subunits: a(1), b(1), b'(1) and c(9-12).

The protein resides in the plastid. The protein localises to the chloroplast thylakoid membrane. The catalysed reaction is ATP + H2O + 4 H(+)(in) = ADP + phosphate + 5 H(+)(out). Produces ATP from ADP in the presence of a proton gradient across the membrane. The catalytic sites are hosted primarily by the beta subunits. This is ATP synthase subunit beta, chloroplastic (atpB) from Osmundastrum cinnamomeum (Cinnamon fern).